Here is a 271-residue protein sequence, read N- to C-terminus: Acetyl-coenzyme A carboxylase carboxyl transferase subunit alpha (271 aa).

A CoA carboxyltransferase C-terminal domain is found at 1–247; the sequence is MSRELIRTVD…KKTILEALGE (247 aa).

The protein belongs to the AccA family. As to quaternary structure, acetyl-CoA carboxylase is a heterohexamer composed of biotin carboxyl carrier protein (AccB), biotin carboxylase (AccC) and two subunits each of ACCase subunit alpha (AccA) and ACCase subunit beta (AccD).

Its subcellular location is the cytoplasm. It carries out the reaction N(6)-carboxybiotinyl-L-lysyl-[protein] + acetyl-CoA = N(6)-biotinyl-L-lysyl-[protein] + malonyl-CoA. It functions in the pathway lipid metabolism; malonyl-CoA biosynthesis; malonyl-CoA from acetyl-CoA: step 1/1. Its function is as follows. Component of the acetyl coenzyme A carboxylase (ACC) complex. First, biotin carboxylase catalyzes the carboxylation of biotin on its carrier protein (BCCP) and then the CO(2) group is transferred by the carboxyltransferase to acetyl-CoA to form malonyl-CoA. This Clostridium perfringens (strain SM101 / Type A) protein is Acetyl-coenzyme A carboxylase carboxyl transferase subunit alpha.